A 283-amino-acid polypeptide reads, in one-letter code: Cyclin-C (283 aa).

One can recognise a Cyclin N-terminal domain in the interval 20–151 (DLLKERQKDL…LLELMDCCLI (132 aa)). A disordered region spans residues 252–283 (TILSKMPKPKPPPNSEGEQGPNGSQNSSYSQS). Residues 272–283 (PNGSQNSSYSQS) are compositionally biased toward polar residues. S275 is modified (phosphoserine).

Belongs to the cyclin family. Cyclin C subfamily. As to quaternary structure, component of the Mediator complex, which is composed of MED1, MED4, MED6, MED7, MED8, MED9, MED10, MED11, MED12, MED13, MED13L, MED14, MED15, MED16, MED17, MED18, MED19, MED20, MED21, MED22, MED23, MED24, MED25, MED26, MED27, MED29, MED30, MED31, CCNC, CDK8 and CDC2L6/CDK11. The MED12, MED13, CCNC and CDK8 subunits form a distinct module termed the CDK8 module. Mediator containing the CDK8 module is less active than Mediator lacking this module in supporting transcriptional activation. Individual preparations of the Mediator complex lacking one or more distinct subunits have been variously termed ARC, CRSP, DRIP, PC2, SMCC and TRAP. The cylin/CDK pair formed by CCNC/CDK8 also associates with the large subunit of RNA polymerase II.

The protein localises to the nucleus. Functionally, component of the Mediator complex, a coactivator involved in regulated gene transcription of nearly all RNA polymerase II-dependent genes. Mediator functions as a bridge to convey information from gene-specific regulatory proteins to the basal RNA polymerase II transcription machinery. Mediator is recruited to promoters by direct interactions with regulatory proteins and serves as a scaffold for the assembly of a functional preinitiation complex with RNA polymerase II and the general transcription factors. Binds to and activates cyclin-dependent kinase CDK8 that phosphorylates the CTD (C-terminal domain) of the large subunit of RNA polymerase II (RNAp II), which may inhibit the formation of a transcription initiation complex. The protein is Cyclin-C (Ccnc) of Mus musculus (Mouse).